The primary structure comprises 271 residues: Formamidopyrimidine-DNA glycosylase (271 aa).

Proline 2 functions as the Schiff-base intermediate with DNA in the catalytic mechanism. The active-site Proton donor is the glutamate 3. Catalysis depends on lysine 57, which acts as the Proton donor; for beta-elimination activity. DNA contacts are provided by histidine 90, arginine 109, and lysine 151. An FPG-type zinc finger spans residues histidine 236–glutamine 270. Residue arginine 260 is the Proton donor; for delta-elimination activity of the active site.

The protein belongs to the FPG family. Monomer. Zn(2+) serves as cofactor.

The enzyme catalyses Hydrolysis of DNA containing ring-opened 7-methylguanine residues, releasing 2,6-diamino-4-hydroxy-5-(N-methyl)formamidopyrimidine.. It catalyses the reaction 2'-deoxyribonucleotide-(2'-deoxyribose 5'-phosphate)-2'-deoxyribonucleotide-DNA = a 3'-end 2'-deoxyribonucleotide-(2,3-dehydro-2,3-deoxyribose 5'-phosphate)-DNA + a 5'-end 5'-phospho-2'-deoxyribonucleoside-DNA + H(+). Functionally, involved in base excision repair of DNA damaged by oxidation or by mutagenic agents. Acts as a DNA glycosylase that recognizes and removes damaged bases. Has a preference for oxidized purines, such as 7,8-dihydro-8-oxoguanine (8-oxoG). Has AP (apurinic/apyrimidinic) lyase activity and introduces nicks in the DNA strand. Cleaves the DNA backbone by beta-delta elimination to generate a single-strand break at the site of the removed base with both 3'- and 5'-phosphates. The sequence is that of Formamidopyrimidine-DNA glycosylase from Shewanella pealeana (strain ATCC 700345 / ANG-SQ1).